We begin with the raw amino-acid sequence, 435 residues long: Serine hydroxymethyltransferase (435 aa).

(6S)-5,6,7,8-tetrahydrofolate is bound by residues Leu-133 and Gly-137 to Leu-139. N6-(pyridoxal phosphate)lysine is present on Lys-242.

Belongs to the SHMT family. Homodimer. Requires pyridoxal 5'-phosphate as cofactor.

Its subcellular location is the cytoplasm. The catalysed reaction is (6R)-5,10-methylene-5,6,7,8-tetrahydrofolate + glycine + H2O = (6S)-5,6,7,8-tetrahydrofolate + L-serine. Its pathway is one-carbon metabolism; tetrahydrofolate interconversion. It functions in the pathway amino-acid biosynthesis; glycine biosynthesis; glycine from L-serine: step 1/1. Functionally, catalyzes the reversible interconversion of serine and glycine with tetrahydrofolate (THF) serving as the one-carbon carrier. This reaction serves as the major source of one-carbon groups required for the biosynthesis of purines, thymidylate, methionine, and other important biomolecules. Also exhibits THF-independent aldolase activity toward beta-hydroxyamino acids, producing glycine and aldehydes, via a retro-aldol mechanism. The sequence is that of Serine hydroxymethyltransferase from Hyphomonas neptunium (strain ATCC 15444).